Consider the following 315-residue polypeptide: tRNA pseudouridine synthase B (315 aa).

Residue D54 is the Nucleophile of the active site.

It belongs to the pseudouridine synthase TruB family. Type 1 subfamily.

It carries out the reaction uridine(55) in tRNA = pseudouridine(55) in tRNA. Functionally, responsible for synthesis of pseudouridine from uracil-55 in the psi GC loop of transfer RNAs. The chain is tRNA pseudouridine synthase B from Cupriavidus taiwanensis (strain DSM 17343 / BCRC 17206 / CCUG 44338 / CIP 107171 / LMG 19424 / R1) (Ralstonia taiwanensis (strain LMG 19424)).